The following is a 238-amino-acid chain: Green fluorescent protein (238 aa).

The 5-imidazolinone (Ser-Gly) cross-link spans 65–67 (SYG). Position 66 is a (Z)-2,3-didehydrotyrosine (tyrosine 66).

Belongs to the GFP family. As to quaternary structure, monomer. Contains a chromophore consisting of modified amino acid residues. The chromophore is formed by autocatalytic backbone condensation between Ser-65 and Gly-67, and oxidation of Tyr-66 to didehydrotyrosine. Maturation of the chromophore requires nothing other than molecular oxygen. As to expression, photocytes.

In terms of biological role, energy-transfer acceptor. Its role is to transduce the blue chemiluminescence of the protein aequorin into green fluorescent light by energy transfer. Fluoresces in vivo upon receiving energy from the Ca(2+)-activated photoprotein aequorin. This Aequorea victoria (Water jellyfish) protein is Green fluorescent protein (GFP).